The chain runs to 299 residues: Pyridoxal 5'-phosphate synthase subunit PdxS (299 aa).

D24 provides a ligand contact to D-ribose 5-phosphate. K81 serves as the catalytic Schiff-base intermediate with D-ribose 5-phosphate. Position 153 (G153) interacts with D-ribose 5-phosphate. R165 serves as a coordination point for D-glyceraldehyde 3-phosphate. D-ribose 5-phosphate-binding positions include G219 and G240–S241.

Belongs to the PdxS/SNZ family. As to quaternary structure, in the presence of PdxT, forms a dodecamer of heterodimers.

The catalysed reaction is aldehydo-D-ribose 5-phosphate + D-glyceraldehyde 3-phosphate + L-glutamine = pyridoxal 5'-phosphate + L-glutamate + phosphate + 3 H2O + H(+). Its pathway is cofactor biosynthesis; pyridoxal 5'-phosphate biosynthesis. Its function is as follows. Catalyzes the formation of pyridoxal 5'-phosphate from ribose 5-phosphate (RBP), glyceraldehyde 3-phosphate (G3P) and ammonia. The ammonia is provided by the PdxT subunit. Can also use ribulose 5-phosphate and dihydroxyacetone phosphate as substrates, resulting from enzyme-catalyzed isomerization of RBP and G3P, respectively. This chain is Pyridoxal 5'-phosphate synthase subunit PdxS, found in Methanococcus maripaludis (strain C7 / ATCC BAA-1331).